Reading from the N-terminus, the 208-residue chain is Probable thymidylate kinase (208 aa).

9–16 (GIDGAGKS) lines the ATP pocket.

The protein belongs to the thymidylate kinase family.

It catalyses the reaction dTMP + ATP = dTDP + ADP. In Thermococcus gammatolerans (strain DSM 15229 / JCM 11827 / EJ3), this protein is Probable thymidylate kinase.